The following is a 324-amino-acid chain: Glyoxylate/hydroxypyruvate reductase B (324 aa).

Active-site residues include arginine 237 and glutamate 266. Histidine 285 functions as the Proton donor in the catalytic mechanism.

This sequence belongs to the D-isomer specific 2-hydroxyacid dehydrogenase family. GhrB subfamily. In terms of assembly, homodimer.

The protein localises to the cytoplasm. The catalysed reaction is glycolate + NADP(+) = glyoxylate + NADPH + H(+). It carries out the reaction (R)-glycerate + NAD(+) = 3-hydroxypyruvate + NADH + H(+). It catalyses the reaction (R)-glycerate + NADP(+) = 3-hydroxypyruvate + NADPH + H(+). Functionally, catalyzes the NADPH-dependent reduction of glyoxylate and hydroxypyruvate into glycolate and glycerate, respectively. This chain is Glyoxylate/hydroxypyruvate reductase B, found in Salmonella heidelberg (strain SL476).